We begin with the raw amino-acid sequence, 620 residues long: Glutathione-regulated potassium-efflux system protein KefC (620 aa).

A run of 12 helical transmembrane segments spans residues 4–24 (HTLLQALIYLGSAALIVPIAV), 26–46 (LGLGSVLGYLIAGCIIGPWGL), 54–74 (SILHFAEIGVVLMLFVIGLEL), 90–110 (GALQMVVCGGLIGLFCMFLGL), 114–134 (VAELIGMTLALSSTAIAMQAM), 149–169 (FAVLLFQDIAAIPLVAMIPLL), 178–198 (LGAFALSALKVAGALALVVLL), 218–238 (VFSAVALFLVFGFGLLLEEVG), 270–290 (GLLLGLFFIGVGMSIDFGTLV), 294–314 (LRILLLLAGFLAIKIVMLWLV), 327–347 (WFAVLLGQGSEFAFVVFGAAQ), and 359–379 (ALTLAVALSMAATPIFLVLLT). The region spanning 399 to 518 (QPRVIVAGFG…AGVAMPERET (120 aa)) is the RCK N-terminal domain. The segment at 599–620 (QGTAEGKHSGEAADEPEVKPSI) is disordered.

This sequence belongs to the monovalent cation:proton antiporter 2 (CPA2) transporter (TC 2.A.37) family. KefC subfamily. As to quaternary structure, homodimer. Interacts with the regulatory subunit KefF.

Its subcellular location is the cell inner membrane. In terms of biological role, pore-forming subunit of a potassium efflux system that confers protection against electrophiles. Catalyzes K(+)/H(+) antiport. This is Glutathione-regulated potassium-efflux system protein KefC from Salmonella dublin (strain CT_02021853).